The following is a 669-amino-acid chain: Acetyl-coenzyme A synthetase (669 aa).

CoA contacts are provided by residues 211–214 (RGGK) and Thr-329. ATP-binding positions include 404-406 (GEP), 428-433 (DTYWQT), Asp-519, and Arg-534. Ser-542 contributes to the CoA binding site. Position 545 (Arg-545) interacts with ATP. A CoA-binding site is contributed by Arg-602.

This sequence belongs to the ATP-dependent AMP-binding enzyme family.

It catalyses the reaction acetate + ATP + CoA = acetyl-CoA + AMP + diphosphate. It participates in ketone degradation; acetoin degradation. Its pathway is antibiotic biosynthesis; penicillin biosynthesis. This Penicillium chrysogenum (Penicillium notatum) protein is Acetyl-coenzyme A synthetase (facA).